Consider the following 101-residue polypeptide: Urease subunit beta (101 aa).

This sequence belongs to the urease beta subunit family. As to quaternary structure, heterotrimer of UreA (gamma), UreB (beta) and UreC (alpha) subunits. Three heterotrimers associate to form the active enzyme.

The protein localises to the cytoplasm. The catalysed reaction is urea + 2 H2O + H(+) = hydrogencarbonate + 2 NH4(+). It functions in the pathway nitrogen metabolism; urea degradation; CO(2) and NH(3) from urea (urease route): step 1/1. This Rhizobium etli (strain CIAT 652) protein is Urease subunit beta.